The chain runs to 190 residues: Selenoprotein S (190 aa).

Residues 28 to 48 traverse the membrane as a helical segment; the sequence is SLLASYGWYILFSCILLYIVI. Positions 78–90 are VCP/p97-interacting motif (VIM); the sequence is RQEALAAARLRMQ. The interval 115 to 190 is disordered; it reads KIEMWDSMQE…RRGPSSGGUN (76 aa). Positions 160 to 174 are enriched in gly residues; it reads RGGGYNPLTGEGGGT. Residue U189 is a non-standard amino acid, selenocysteine.

This sequence belongs to the selenoprotein S family. As to quaternary structure, interacts with DERL1 and (via VIM motif) with VCP, suggesting that it forms a membrane complex with DERL1 that serves as a receptor for VCP. Also interacts with DERL2, DERL3 and SELENOK. The SELENOK-SELENOS complex interacts with VCP. Interacts with CCDC47. In terms of processing, truncated SELENOS proteins produced by failed UGA/Sec decoding are ubiquitinated by the CRL2(KLHDC2) and CRL2(KLHDC3) complexes, which recognizes the glycine (Gly) at the C-terminus of truncated SELENOS proteins. Truncated SELENOS proteins produced by failed UGA/Sec decoding are also ubiquitinated by the CRL5(KLHDC1) complex.

The protein localises to the endoplasmic reticulum membrane. Its subcellular location is the cytoplasm. Involved in the degradation process of misfolded endoplasmic reticulum (ER) luminal proteins. Participates in the transfer of misfolded proteins from the ER to the cytosol, where they are destroyed by the proteasome in a ubiquitin-dependent manner. Probably acts by serving as a linker between DERL1, which mediates the retrotranslocation of misfolded proteins into the cytosol, and the ATPase complex VCP, which mediates the translocation and ubiquitination. This chain is Selenoprotein S, found in Mus musculus (Mouse).